A 133-amino-acid chain; its full sequence is Interleukin-4 (133 aa).

The first 24 residues, 1–24 (MGLTSQLIPTLVCLLVCTSNFAHG), serve as a signal peptide directing secretion. Disulfide bonds link Cys-27–Cys-133, Cys-48–Cys-85, and Cys-70–Cys-105. Residues Asn-62, Asn-96, Asn-102, and Asn-108 are each glycosylated (N-linked (GlcNAc...) asparagine).

The protein belongs to the IL-4/IL-13 family.

It localises to the secreted. Its function is as follows. Participates in at least several B-cell activation processes as well as of other cell types. It is a costimulator of DNA-synthesis. It induces the expression of class II MHC molecules on resting B-cells. It enhances both secretion and cell surface expression of IgE and IgG1. It also regulates the expression of the low affinity Fc receptor for IgE (CD23) on both lymphocytes and monocytes. Positively regulates IL31RA expression in macrophages. Stimulates autophagy in dendritic cells by interfering with mTORC1 signaling and through the induction of RUFY4. In Lama glama (Llama), this protein is Interleukin-4 (IL4).